A 101-amino-acid chain; its full sequence is NADH-quinone oxidoreductase subunit K (101 aa).

The next 3 membrane-spanning stretches (helical) occupy residues 4 to 24 (LSHY…GIFI), 30 to 50 (IVIL…LVAF), and 65 to 85 (FVLT…VVFF).

The protein belongs to the complex I subunit 4L family. In terms of assembly, NDH-1 is composed of 14 different subunits. Subunits NuoA, H, J, K, L, M, N constitute the membrane sector of the complex.

It is found in the cell inner membrane. The catalysed reaction is a quinone + NADH + 5 H(+)(in) = a quinol + NAD(+) + 4 H(+)(out). NDH-1 shuttles electrons from NADH, via FMN and iron-sulfur (Fe-S) centers, to quinones in the respiratory chain. The immediate electron acceptor for the enzyme in this species is believed to be ubiquinone. Couples the redox reaction to proton translocation (for every two electrons transferred, four hydrogen ions are translocated across the cytoplasmic membrane), and thus conserves the redox energy in a proton gradient. The polypeptide is NADH-quinone oxidoreductase subunit K (Methylobacterium sp. (strain 4-46)).